A 556-amino-acid polypeptide reads, in one-letter code: 2-succinyl-5-enolpyruvyl-6-hydroxy-3-cyclohexene-1-carboxylate synthase (556 aa).

It belongs to the TPP enzyme family. MenD subfamily. As to quaternary structure, homodimer. It depends on Mg(2+) as a cofactor. Mn(2+) is required as a cofactor. Requires thiamine diphosphate as cofactor.

It catalyses the reaction isochorismate + 2-oxoglutarate + H(+) = 5-enolpyruvoyl-6-hydroxy-2-succinyl-cyclohex-3-ene-1-carboxylate + CO2. It participates in quinol/quinone metabolism; 1,4-dihydroxy-2-naphthoate biosynthesis; 1,4-dihydroxy-2-naphthoate from chorismate: step 2/7. Its pathway is quinol/quinone metabolism; menaquinone biosynthesis. In terms of biological role, catalyzes the thiamine diphosphate-dependent decarboxylation of 2-oxoglutarate and the subsequent addition of the resulting succinic semialdehyde-thiamine pyrophosphate anion to isochorismate to yield 2-succinyl-5-enolpyruvyl-6-hydroxy-3-cyclohexene-1-carboxylate (SEPHCHC). The protein is 2-succinyl-5-enolpyruvyl-6-hydroxy-3-cyclohexene-1-carboxylate synthase of Mycobacterium leprae (strain Br4923).